The chain runs to 128 residues: Ribonuclease pancreatic (128 aa).

Residues 1-20 (KETAAMKFQRQHMDSGSSLS) form a disordered region. The substrate site is built by lysine 7 and arginine 10. The active-site Proton acceptor is histidine 12. 4 disulfide bridges follow: cysteine 26/cysteine 84, cysteine 40/cysteine 95, cysteine 58/cysteine 110, and cysteine 65/cysteine 72. N-linked (GlcNAc...) asparagine glycosylation occurs at asparagine 34. Substrate contacts are provided by residues 41–45 (KPVNT), lysine 66, and arginine 85. The active-site Proton donor is the histidine 119.

The protein belongs to the pancreatic ribonuclease family. As to quaternary structure, monomer. Interacts with and forms tight 1:1 complexes with RNH1. Dimerization of two such complexes may occur. Interaction with RNH1 inhibits this protein. In terms of tissue distribution, pancreas.

The protein localises to the secreted. The catalysed reaction is an [RNA] containing cytidine + H2O = an [RNA]-3'-cytidine-3'-phosphate + a 5'-hydroxy-ribonucleotide-3'-[RNA].. It catalyses the reaction an [RNA] containing uridine + H2O = an [RNA]-3'-uridine-3'-phosphate + a 5'-hydroxy-ribonucleotide-3'-[RNA].. Functionally, endonuclease that catalyzes the cleavage of RNA on the 3' side of pyrimidine nucleotides. Acts on single-stranded and double-stranded RNA. This is Ribonuclease pancreatic (RNASE1) from Choloepus hoffmanni (Hoffmann's two-fingered sloth).